Reading from the N-terminus, the 258-residue chain is Ribosomal RNA small subunit methyltransferase J (258 aa).

S-adenosyl-L-methionine contacts are provided by residues 107–108 (RD), 123–124 (ER), 159–160 (SS), and Asp-177.

The protein belongs to the methyltransferase superfamily. RsmJ family.

It is found in the cytoplasm. The catalysed reaction is guanosine(1516) in 16S rRNA + S-adenosyl-L-methionine = N(2)-methylguanosine(1516) in 16S rRNA + S-adenosyl-L-homocysteine + H(+). Its function is as follows. Specifically methylates the guanosine in position 1516 of 16S rRNA. The chain is Ribosomal RNA small subunit methyltransferase J from Shewanella sediminis (strain HAW-EB3).